The chain runs to 266 residues: Norfluorocurarine synthase 2 (266 aa).

Residues 11–121 (HFVLVHGAGH…IMPDSTHPPI (111 aa)) enclose the AB hydrolase-1 domain. Residues serine 86, aspartate 216, and histidine 244 contribute to the active site.

Belongs to the AB hydrolase superfamily. As to quaternary structure, homodimer. Mainly expressed in roots.

It catalyses the reaction 17-dehydropreakuammicine + H2O = norfluorocurarine + methanol + CO2. The protein operates within alkaloid biosynthesis. Hydrolase involved in the biosynthesis of curare monoterpene indole alkaloids (MIAs), natural products such as strychnine, a neurotoxic compound used as a pesticide to control rodents, and its pharmacologically active derivatives, including brucine, used to regulate blood pressure. Curare alkaloids act as animal glycine receptor antagonists. Catalyzes the conversion of dehydropreakuammicine to norfluorocurarine. The sequence is that of Norfluorocurarine synthase 2 from Strychnos nux-vomica (Poison nut).